The primary structure comprises 397 residues: Multidrug resistance protein MdtH (397 aa).

11 consecutive transmembrane segments (helical) span residues 11 to 31 (WFLALDSLLVILGFFVVMPMI), 32 to 52 (SLRFVDQLGWAAGVVGLALGL), 71 to 91 (FGARPLIVGGMLLRAAGFASL), 94 to 114 (AQSGLELILSCVISGLGGCLF), 137 to 157 (LLMMLESAGAVVGALLGSWLL), 163 to 183 (YVCLLGAGLFVCAALCNLLIL), 211 to 231 (LVLILSGYYALWVQVMLIFPI), 242 to 262 (AVGWMYTLETAISLALLYPLA), 291 to 311 (FANTLPAVFMLLACFYLGIVI), 340 to 360 (LALGGMTGYVGGGALHDYAML), and 366 to 386 (LPWLVLGTVGVTTLLLLVNCF).

The protein belongs to the major facilitator superfamily. DHA1 family. MdtH (TC 2.A.1.2.21) subfamily.

The protein resides in the cell inner membrane. The sequence is that of Multidrug resistance protein MdtH from Aeromonas hydrophila subsp. hydrophila (strain ATCC 7966 / DSM 30187 / BCRC 13018 / CCUG 14551 / JCM 1027 / KCTC 2358 / NCIMB 9240 / NCTC 8049).